An 833-amino-acid polypeptide reads, in one-letter code: Leucine--tRNA ligase (833 aa).

Residues 41-52 carry the 'HIGH' region motif; that stretch reads PYPSGVGLHVGH. The 'KMSKS' region signature appears at 610–614; it reads KMSKS. Lysine 613 serves as a coordination point for ATP.

Belongs to the class-I aminoacyl-tRNA synthetase family.

The protein localises to the cytoplasm. It catalyses the reaction tRNA(Leu) + L-leucine + ATP = L-leucyl-tRNA(Leu) + AMP + diphosphate. The protein is Leucine--tRNA ligase of Streptococcus pneumoniae serotype 2 (strain D39 / NCTC 7466).